Consider the following 250-residue polypeptide: DNA repair protein RecO (250 aa).

The protein belongs to the RecO family.

Its function is as follows. Involved in DNA repair and RecF pathway recombination. The polypeptide is DNA repair protein RecO (Beijerinckia indica subsp. indica (strain ATCC 9039 / DSM 1715 / NCIMB 8712)).